A 187-amino-acid chain; its full sequence is dITP/XTP pyrophosphatase (187 aa).

7–12 (TGNKHK) is a binding site for substrate. Mg(2+) is bound by residues Glu-36 and Asp-64. Asp-64 (proton acceptor) is an active-site residue. Substrate is bound by residues Ala-65, 140-143 (FAFD), Lys-163, and 168-169 (HR).

It belongs to the HAM1 NTPase family. Homodimer. Mg(2+) serves as cofactor.

The catalysed reaction is XTP + H2O = XMP + diphosphate + H(+). It carries out the reaction dITP + H2O = dIMP + diphosphate + H(+). The enzyme catalyses ITP + H2O = IMP + diphosphate + H(+). Its function is as follows. Pyrophosphatase that catalyzes the hydrolysis of nucleoside triphosphates to their monophosphate derivatives, with a high preference for the non-canonical purine nucleotides XTP (xanthosine triphosphate), dITP (deoxyinosine triphosphate) and ITP. Seems to function as a house-cleaning enzyme that removes non-canonical purine nucleotides from the nucleotide pool, thus preventing their incorporation into DNA/RNA and avoiding chromosomal lesions. The chain is dITP/XTP pyrophosphatase from Methanothermobacter marburgensis (strain ATCC BAA-927 / DSM 2133 / JCM 14651 / NBRC 100331 / OCM 82 / Marburg) (Methanobacterium thermoautotrophicum).